A 250-amino-acid chain; its full sequence is uncharacterized protein (250 aa).

NAD(+) contacts are provided by Ser15, Leu17, Asp36, Asp56, Val57, and Cys82. A substrate-binding site is contributed by Ser143. Positions 156, 160, 189, and 191 each coordinate NAD(+). Tyr156 acts as the Proton acceptor in catalysis.

The protein belongs to the short-chain dehydrogenases/reductases (SDR) family.

This is an uncharacterized protein from Mycobacterium tuberculosis (strain CDC 1551 / Oshkosh).